A 78-amino-acid polypeptide reads, in one-letter code: Large ribosomal subunit protein uL24 (78 aa).

It belongs to the universal ribosomal protein uL24 family. As to quaternary structure, part of the 50S ribosomal subunit.

Its function is as follows. One of two assembly initiator proteins, it binds directly to the 5'-end of the 23S rRNA, where it nucleates assembly of the 50S subunit. Functionally, one of the proteins that surrounds the polypeptide exit tunnel on the outside of the subunit. This chain is Large ribosomal subunit protein uL24, found in Campylobacter curvus (strain 525.92).